A 764-amino-acid polypeptide reads, in one-letter code: Thyrotropin receptor (764 aa).

Residues 1–21 (MRPTPLLRLALLLVLPSSLWG) form the signal peptide. Topologically, residues 22–413 (ERCPSPPCEC…EFNPCEDIMG (392 aa)) are extracellular. Cysteine 31 and cysteine 41 are disulfide-bonded. The stretch at 51 to 74 (PPSTQTLKFIETHLKTIPSRAFSN) is one LRR 1 repeat. Asparagine 77 and asparagine 99 each carry an N-linked (GlcNAc...) asparagine glycan. LRR repeat units follow at residues 125-150 (LPLL…IYST), 152-174 (VFFI…AFQG), 176-199 (SNET…AFNG), 201-223 (KLDA…AFAG), and 225-248 (YSGP…GLEH). 2 N-linked (GlcNAc...) asparagine glycosylation sites follow: asparagine 177 and asparagine 198. Residue asparagine 302 is glycosylated (N-linked (GlcNAc...) asparagine). Tyrosine 385 is subject to Sulfotyrosine. Residues 414-441 (YKFLRIVVWFVSLLALLGNVFVLVILLT) traverse the membrane as a helical segment. The Cytoplasmic portion of the chain corresponds to 442 to 450 (SHYKLTVPR). The helical transmembrane segment at 451–473 (FLMCNLAFADFCMGLYLLLIASV) threads the bilayer. The Extracellular segment spans residues 474 to 494 (DLYTQSEYYNHAIDWQTGPGC). A disulfide bridge links cysteine 494 with cysteine 569. The chain crosses the membrane as a helical span at residues 495–517 (NTAGFFTVFASELSVYTLTVITL). Topologically, residues 518 to 537 (ERWYAITFAMHLDRKIRLWH) are cytoplasmic. Residues 538 to 560 (AYVIMLGGWVCCFLLALLPLVGI) traverse the membrane as a helical segment. The Extracellular portion of the chain corresponds to 561-580 (SSYAKVSICLPMDTETPLAL). A helical membrane pass occupies residues 581-602 (AYIILVLLLNIIAFIIVCACYV). At 603-625 (KIYITVRNPHYNPGDKDTRIAKR) the chain is on the cytoplasmic side. A helical membrane pass occupies residues 626–649 (MAVLIFTDFMCMAPISFYALSALM). Residues 650 to 660 (NKPLITVTNSK) are Extracellular-facing. Residues 661–682 (ILLVLFYPLNSCANPFLYAIFT) form a helical membrane-spanning segment. Residues 683–764 (KAFQRDVFML…TSKEYKQTVL (82 aa)) are Cytoplasmic-facing. A PDZ-binding motif is present at residues 762 to 764 (TVL).

The protein belongs to the G-protein coupled receptor 1 family. FSH/LSH/TSH subfamily. As to quaternary structure, interacts with heterodimer GPHA2:GPHB5; this interaction stimulates cAMP production. Interacts (via the PDZ-binding motif) with SCRIB; regulates TSHR trafficking and function. In terms of processing, glycosylated. Post-translationally, sulfated. Sulfation on Tyr-385 plays a role in thyrotropin receptor binding and activation.

The protein resides in the cell membrane. It is found in the basolateral cell membrane. Receptor for the thyroid-stimulating hormone (TSH) or thyrotropin. Also acts as a receptor for the heterodimeric glycoprotein hormone (GPHA2:GPHB5) or thyrostimulin. The activity of this receptor is mediated by G proteins which activate adenylate cyclase. Plays a central role in controlling thyroid cell metabolism. This Ovis aries (Sheep) protein is Thyrotropin receptor (TSHR).